A 315-amino-acid polypeptide reads, in one-letter code: Ribose-phosphate pyrophosphokinase (315 aa).

ATP-binding positions include 37 to 39 and 96 to 97; these read DGE and RQ. Mg(2+) contacts are provided by His131 and Asp171. Residue Lys195 is part of the active site. D-ribose 5-phosphate is bound by residues Arg197, Asp221, and 225 to 229; that span reads DTGGT.

The protein belongs to the ribose-phosphate pyrophosphokinase family. Class I subfamily. Homohexamer. Requires Mg(2+) as cofactor.

Its subcellular location is the cytoplasm. It carries out the reaction D-ribose 5-phosphate + ATP = 5-phospho-alpha-D-ribose 1-diphosphate + AMP + H(+). It functions in the pathway metabolic intermediate biosynthesis; 5-phospho-alpha-D-ribose 1-diphosphate biosynthesis; 5-phospho-alpha-D-ribose 1-diphosphate from D-ribose 5-phosphate (route I): step 1/1. In terms of biological role, involved in the biosynthesis of the central metabolite phospho-alpha-D-ribosyl-1-pyrophosphate (PRPP) via the transfer of pyrophosphoryl group from ATP to 1-hydroxyl of ribose-5-phosphate (Rib-5-P). The chain is Ribose-phosphate pyrophosphokinase from Pasteurella multocida (strain Pm70).